The primary structure comprises 91 residues: MTDKEVKAPKIEFPVVDYPIKVISDTGVGRKDLILEIVRKHATINDQRVDERSSSTGKYTTIQLHIVATDQDQLYNINSELRATGFVHMVL.

This sequence belongs to the UPF0250 family.

This Pseudomonas fluorescens (strain SBW25) protein is UPF0250 protein PFLU_5418.